Here is a 186-residue protein sequence, read N- to C-terminus: ATP-dependent protease subunit HslV (186 aa).

The active site involves Thr-13. The Na(+) site is built by Ala-167, Cys-170, and Thr-173.

The protein belongs to the peptidase T1B family. HslV subfamily. As to quaternary structure, a double ring-shaped homohexamer of HslV is capped on each side by a ring-shaped HslU homohexamer. The assembly of the HslU/HslV complex is dependent on binding of ATP.

Its subcellular location is the cytoplasm. The enzyme catalyses ATP-dependent cleavage of peptide bonds with broad specificity.. Its activity is regulated as follows. Allosterically activated by HslU binding. In terms of biological role, protease subunit of a proteasome-like degradation complex believed to be a general protein degrading machinery. The protein is ATP-dependent protease subunit HslV of Allorhizobium ampelinum (strain ATCC BAA-846 / DSM 112012 / S4) (Agrobacterium vitis (strain S4)).